Here is a 209-residue protein sequence, read N- to C-terminus: Uracil phosphoribosyltransferase (209 aa).

5-phospho-alpha-D-ribose 1-diphosphate contacts are provided by residues Arg-79, Arg-104, and 131 to 139 (DPMLATGGS). Residues Ile-194 and 199 to 201 (GDA) contribute to the uracil site. Asp-200 lines the 5-phospho-alpha-D-ribose 1-diphosphate pocket.

Belongs to the UPRTase family. It depends on Mg(2+) as a cofactor.

The enzyme catalyses UMP + diphosphate = 5-phospho-alpha-D-ribose 1-diphosphate + uracil. The protein operates within pyrimidine metabolism; UMP biosynthesis via salvage pathway; UMP from uracil: step 1/1. With respect to regulation, allosterically activated by GTP. Its function is as follows. Catalyzes the conversion of uracil and 5-phospho-alpha-D-ribose 1-diphosphate (PRPP) to UMP and diphosphate. This chain is Uracil phosphoribosyltransferase, found in Streptococcus suis (strain 05ZYH33).